The following is a 200-amino-acid chain: GTP cyclohydrolase-2 (200 aa).

GTP is bound at residue 50-54 (RVHSE). C55, C66, and C68 together coordinate Zn(2+). GTP-binding positions include Q71, 93–95 (EGR), and T115. The Proton acceptor role is filled by D127. R129 acts as the Nucleophile in catalysis. GTP is bound by residues T150 and K155.

It belongs to the GTP cyclohydrolase II family. The cofactor is Zn(2+).

It catalyses the reaction GTP + 4 H2O = 2,5-diamino-6-hydroxy-4-(5-phosphoribosylamino)-pyrimidine + formate + 2 phosphate + 3 H(+). The protein operates within cofactor biosynthesis; riboflavin biosynthesis; 5-amino-6-(D-ribitylamino)uracil from GTP: step 1/4. Its function is as follows. Catalyzes the conversion of GTP to 2,5-diamino-6-ribosylamino-4(3H)-pyrimidinone 5'-phosphate (DARP), formate and pyrophosphate. The protein is GTP cyclohydrolase-2 of Acinetobacter baumannii (strain AB0057).